Consider the following 346-residue polypeptide: Phosphoribosylformylglycinamidine cyclo-ligase (346 aa).

Belongs to the AIR synthase family.

It localises to the cytoplasm. The catalysed reaction is 2-formamido-N(1)-(5-O-phospho-beta-D-ribosyl)acetamidine + ATP = 5-amino-1-(5-phospho-beta-D-ribosyl)imidazole + ADP + phosphate + H(+). It functions in the pathway purine metabolism; IMP biosynthesis via de novo pathway; 5-amino-1-(5-phospho-D-ribosyl)imidazole from N(2)-formyl-N(1)-(5-phospho-D-ribosyl)glycinamide: step 2/2. The protein is Phosphoribosylformylglycinamidine cyclo-ligase of Shewanella piezotolerans (strain WP3 / JCM 13877).